Consider the following 1241-residue polypeptide: ATP-dependent helicase/nuclease subunit A (1241 aa).

One can recognise a UvrD-like helicase ATP-binding domain in the interval 12–485 (SQWTDDQWKA…IDLAKNFRSR (474 aa)). 33-40 (AAAGSGKT) contacts ATP. The region spanning 505–805 (GEIDYDADAE…RIMTIHKSKG (301 aa)) is the UvrD-like helicase C-terminal domain.

This sequence belongs to the helicase family. AddA subfamily. Heterodimer of AddA and AddB/RexB. It depends on Mg(2+) as a cofactor.

It carries out the reaction Couples ATP hydrolysis with the unwinding of duplex DNA by translocating in the 3'-5' direction.. The catalysed reaction is ATP + H2O = ADP + phosphate + H(+). In terms of biological role, the heterodimer acts as both an ATP-dependent DNA helicase and an ATP-dependent, dual-direction single-stranded exonuclease. Recognizes the chi site generating a DNA molecule suitable for the initiation of homologous recombination. The AddA nuclease domain is required for chi fragment generation; this subunit has the helicase and 3' -&gt; 5' nuclease activities. This is ATP-dependent helicase/nuclease subunit A from Bacillus cereus (strain Q1).